The following is a 316-amino-acid chain: MANLKEIRDRIVSVKNTRKITEAMRLVAAAKVRRAQEQVLRSRPFADRLARVLENIQSRMKFEAADSPLLKARAVQKVTLLAVTGDRGLCGGYNTNVIKRTEQRYGELSSQGFEIDLVLIGRKAITYFQNRSSQYKIRASFQDLEQVPTSKDAEEATSEVLSEFLSESTDRVEIIYTKFISLVSCDPVVQTLLPLDPQGIAKEDDEIFRITTKGSRFVIEKDPAPANEEPVLPSDVVFEQSPDQLLNSLLPLYLQNQLLRALQEAAASELASRMTAMNNASDNAKELAKTLNLTYNKARQAAITQEILEVVGGASV.

This sequence belongs to the ATPase gamma chain family. In terms of assembly, F-type ATPases have 2 components, CF(1) - the catalytic core - and CF(0) - the membrane proton channel. CF(1) has five subunits: alpha(3), beta(3), gamma(1), delta(1), epsilon(1). CF(0) has three main subunits: a, b and c.

The protein localises to the cellular thylakoid membrane. In terms of biological role, produces ATP from ADP in the presence of a proton gradient across the membrane. The gamma chain is believed to be important in regulating ATPase activity and the flow of protons through the CF(0) complex. The polypeptide is ATP synthase gamma chain (Prochlorococcus marinus (strain SARG / CCMP1375 / SS120)).